Consider the following 242-residue polypeptide: ATP-dependent dethiobiotin synthetase BioD (242 aa).

Residue 12–17 (EVGKTV) participates in ATP binding. Threonine 16 contacts Mg(2+). The active site involves lysine 37. Serine 41 lines the substrate pocket. Residues aspartate 51 and 112-115 (EGAG) each bind ATP. Mg(2+) is bound by residues aspartate 51 and glutamate 112.

Belongs to the dethiobiotin synthetase family. As to quaternary structure, homodimer. It depends on Mg(2+) as a cofactor.

The protein localises to the cytoplasm. The catalysed reaction is (7R,8S)-7,8-diammoniononanoate + CO2 + ATP = (4R,5S)-dethiobiotin + ADP + phosphate + 3 H(+). Its pathway is cofactor biosynthesis; biotin biosynthesis; biotin from 7,8-diaminononanoate: step 1/2. Functionally, catalyzes a mechanistically unusual reaction, the ATP-dependent insertion of CO2 between the N7 and N8 nitrogen atoms of 7,8-diaminopelargonic acid (DAPA, also called 7,8-diammoniononanoate) to form a ureido ring. The chain is ATP-dependent dethiobiotin synthetase BioD from Bacillus thuringiensis subsp. konkukian (strain 97-27).